Consider the following 662-residue polypeptide: UvrABC system protein B (662 aa).

Residues 25-411 (DGIIAGDKFQ…STRIVEQVIR (387 aa)) enclose the Helicase ATP-binding domain. 38-45 (GVTGSGKT) serves as a coordination point for ATP. Positions 91–114 (YYDYYQPEAYVPARDLYIEKDASI) match the Beta-hairpin motif. In terms of domain architecture, Helicase C-terminal spans 428–594 (QMEHIYGEVK…TIKKAIEDIL (167 aa)). Residues 625 to 660 (KKLIKKLEAQMAEYADMLMFEEAAVIRDKIEEVKRI) enclose the UVR domain.

The protein belongs to the UvrB family. Forms a heterotetramer with UvrA during the search for lesions. Interacts with UvrC in an incision complex.

Its subcellular location is the cytoplasm. The UvrABC repair system catalyzes the recognition and processing of DNA lesions. A damage recognition complex composed of 2 UvrA and 2 UvrB subunits scans DNA for abnormalities. Upon binding of the UvrA(2)B(2) complex to a putative damaged site, the DNA wraps around one UvrB monomer. DNA wrap is dependent on ATP binding by UvrB and probably causes local melting of the DNA helix, facilitating insertion of UvrB beta-hairpin between the DNA strands. Then UvrB probes one DNA strand for the presence of a lesion. If a lesion is found the UvrA subunits dissociate and the UvrB-DNA preincision complex is formed. This complex is subsequently bound by UvrC and the second UvrB is released. If no lesion is found, the DNA wraps around the other UvrB subunit that will check the other stand for damage. This is UvrABC system protein B from Treponema denticola (strain ATCC 35405 / DSM 14222 / CIP 103919 / JCM 8153 / KCTC 15104).